We begin with the raw amino-acid sequence, 676 residues long: DNA ligase (676 aa).

NAD(+)-binding positions include 35-39 (DYEFD), 84-85 (SL), and E118. K120 serves as the catalytic N6-AMP-lysine intermediate. R141, E184, K299, and K323 together coordinate NAD(+). Residues C417, C420, C435, and C441 each contribute to the Zn(2+) site. One can recognise a BRCT domain in the interval 600–676 (LINRNFEGVN…ISEDEFNAML (77 aa)).

It belongs to the NAD-dependent DNA ligase family. LigA subfamily. Mg(2+) is required as a cofactor. Requires Mn(2+) as cofactor.

It catalyses the reaction NAD(+) + (deoxyribonucleotide)n-3'-hydroxyl + 5'-phospho-(deoxyribonucleotide)m = (deoxyribonucleotide)n+m + AMP + beta-nicotinamide D-nucleotide.. In terms of biological role, DNA ligase that catalyzes the formation of phosphodiester linkages between 5'-phosphoryl and 3'-hydroxyl groups in double-stranded DNA using NAD as a coenzyme and as the energy source for the reaction. It is essential for DNA replication and repair of damaged DNA. The sequence is that of DNA ligase from Chlorobium phaeobacteroides (strain DSM 266 / SMG 266 / 2430).